Reading from the N-terminus, the 132-residue chain is Vesicle transport protein GOT1A (132 aa).

Topologically, residues 1-9 (MISITEWQK) are cytoplasmic. The chain crosses the membrane as a helical span at residues 10-30 (IGVGITGFGIFFILFGTLLYF). Asp-31 is a topological domain (lumenal). The chain crosses the membrane as a helical span at residues 32–52 (SVLLAFGNLLFLTGLSLIIGL). Residues 53 to 68 (RKTFWFFFQRHKLKGT) lie on the Cytoplasmic side of the membrane. The helical transmembrane segment at 69–89 (SFLLGGVVIVLLRWPLLGMFL) threads the bilayer. The Lumenal segment spans residues 90-100 (ETYGFFSLFKG). A helical transmembrane segment spans residues 101-121 (FFPVAFGFLGNVCNIPFLGAL). The Cytoplasmic segment spans residues 122–132 (FRRLQGTSSMV).

Belongs to the GOT1 family.

It localises to the golgi apparatus membrane. In terms of biological role, may be involved in fusion of ER-derived transport vesicles with the Golgi complex. This Homo sapiens (Human) protein is Vesicle transport protein GOT1A.